We begin with the raw amino-acid sequence, 397 residues long: uncharacterized protein (397 aa).

A disordered region spans residues 368-391 (TTKPGLHQPTQKRPTQTTSKPYIN). Over residues 375-388 (QPTQKRPTQTTSKP) the composition is skewed to polar residues.

This is an uncharacterized protein from Acanthamoeba polyphaga mimivirus (APMV).